The following is a 553-amino-acid chain: Putative transport protein YidE (553 aa).

Helical transmembrane passes span 4–24 (IALTVSILALVAVVGLFIGNV), 28–48 (GIGLGIGGVLFGGIIVGHFVS), 65–85 (FGLILFVYTIGIQVGPGFFAS), 95–115 (LFAVLIVIIGGLVTAILHKLF), and 158–178 (MSYAMAYPFGICGILFTMWML). RCK C-terminal domains are found at residues 191-276 (QQHE…VIGQ) and 279-361 (DTSL…VLGN). 6 consecutive transmembrane segments (helical) span residues 371-391 (MLPVFIGIGLGVLLGSIPVFV), 393-413 (GFPAALKLGLAGGPLIMALIL), 439-459 (IVLFLSVVGLKSGGDFVNTLV), 464-484 (LSWIGYGALITAVPLITVGIL), 493-513 (YLTMCGMLAGSMTDPPALAFA), and 533-553 (LVMFLRIITPQLLAVLFWSIG).

Belongs to the AAE transporter (TC 2.A.81) family. YidE subfamily.

Its subcellular location is the cell membrane. The polypeptide is Putative transport protein YidE (Escherichia coli O7:K1 (strain IAI39 / ExPEC)).